A 322-amino-acid polypeptide reads, in one-letter code: Large ribosomal subunit protein uL29m (322 aa).

Residues methionine 1–asparagine 44 are disordered.

The protein belongs to the universal ribosomal protein uL29 family. In terms of assembly, component of the mitochondrial large ribosomal subunit. Mature mitochondrial ribosomes consist of a small (37S) and a large (54S) subunit. The 37S subunit contains at least 33 different proteins and 1 molecule of RNA (15S). The 54S subunit contains at least 45 different proteins and 1 molecule of RNA (21S).

The protein localises to the mitochondrion. The chain is Large ribosomal subunit protein uL29m (MRPL4) from Vanderwaltozyma polyspora (strain ATCC 22028 / DSM 70294 / BCRC 21397 / CBS 2163 / NBRC 10782 / NRRL Y-8283 / UCD 57-17) (Kluyveromyces polysporus).